A 102-amino-acid chain; its full sequence is Integration host factor subunit beta (102 aa).

The protein belongs to the bacterial histone-like protein family. In terms of assembly, heterodimer of an alpha and a beta chain.

In terms of biological role, this protein is one of the two subunits of integration host factor, a specific DNA-binding protein that functions in genetic recombination as well as in transcriptional and translational control. In Rhizobium radiobacter (Agrobacterium tumefaciens), this protein is Integration host factor subunit beta (ihfB).